The primary structure comprises 637 residues: 1-deoxy-D-xylulose-5-phosphate synthase (637 aa).

Thiamine diphosphate-binding positions include H76 and 117–119 (GHS). D148 contributes to the Mg(2+) binding site. Thiamine diphosphate-binding positions include 149-150 (GA), N177, Y294, and E381. A Mg(2+)-binding site is contributed by N177.

Belongs to the transketolase family. DXPS subfamily. As to quaternary structure, homodimer. Mg(2+) is required as a cofactor. Thiamine diphosphate serves as cofactor.

The catalysed reaction is D-glyceraldehyde 3-phosphate + pyruvate + H(+) = 1-deoxy-D-xylulose 5-phosphate + CO2. It functions in the pathway metabolic intermediate biosynthesis; 1-deoxy-D-xylulose 5-phosphate biosynthesis; 1-deoxy-D-xylulose 5-phosphate from D-glyceraldehyde 3-phosphate and pyruvate: step 1/1. In terms of biological role, catalyzes the acyloin condensation reaction between C atoms 2 and 3 of pyruvate and glyceraldehyde 3-phosphate to yield 1-deoxy-D-xylulose-5-phosphate (DXP). The sequence is that of 1-deoxy-D-xylulose-5-phosphate synthase from Neisseria meningitidis serogroup B (strain ATCC BAA-335 / MC58).